Reading from the N-terminus, the 349-residue chain is Inositol-tetrakisphosphate 1-kinase 2 (349 aa).

Positions 48 and 90 each coordinate 1D-myo-inositol 1,3,4-trisphosphate. ATP contacts are provided by Arg-125 and Lys-175. Positions 186 and 218 each coordinate 1D-myo-inositol 1,3,4-trisphosphate. Residues 207 to 218 (QEFVNHGGILFK) and Ser-233 each bind ATP. Mg(2+)-binding residues include Asp-298, Asp-313, and Asn-315. 1D-myo-inositol 1,3,4-trisphosphate is bound at residue Asn-315.

Belongs to the ITPK1 family. In terms of assembly, monomer. Mg(2+) is required as a cofactor.

The enzyme catalyses 1D-myo-inositol 3,4,5,6-tetrakisphosphate + ATP = 1D-myo-inositol 1,3,4,5,6-pentakisphosphate + ADP + H(+). It catalyses the reaction 1D-myo-inositol 1,3,4-trisphosphate + ATP = 1D-myo-inositol 1,3,4,5-tetrakisphosphate + ADP + H(+). It carries out the reaction 1D-myo-inositol 1,3,4-trisphosphate + ATP = 1D-myo-inositol 1,3,4,6-tetrakisphosphate + ADP + H(+). Kinase that can phosphorylate various inositol polyphosphate such as Ins(3,4,5,6)P4 or Ins(1,3,4)P3 and participates in phytic acid biosynthesis in developing seeds. Phytic acid is the primary storage form of phosphorus in cereal grains and other plant seeds. The protein is Inositol-tetrakisphosphate 1-kinase 2 (ITPK2) of Oryza sativa subsp. indica (Rice).